The chain runs to 175 residues: 6,7-dimethyl-8-ribityllumazine synthase (175 aa).

5-amino-6-(D-ribitylamino)uracil is bound by residues Phe24, 58–60 (ALE), and 82–84 (AVI). 87–88 (ET) is a (2S)-2-hydroxy-3-oxobutyl phosphate binding site. The Proton donor role is filled by His90. 5-amino-6-(D-ribitylamino)uracil is bound at residue Asn115. Residue Arg129 participates in (2S)-2-hydroxy-3-oxobutyl phosphate binding. Positions 151–175 (LEPEEDDEDEDEEDEDFDDEETDRR) are disordered. Acidic residues predominate over residues 152 to 175 (EPEEDDEDEDEEDEDFDDEETDRR).

This sequence belongs to the DMRL synthase family.

It carries out the reaction (2S)-2-hydroxy-3-oxobutyl phosphate + 5-amino-6-(D-ribitylamino)uracil = 6,7-dimethyl-8-(1-D-ribityl)lumazine + phosphate + 2 H2O + H(+). The protein operates within cofactor biosynthesis; riboflavin biosynthesis; riboflavin from 2-hydroxy-3-oxobutyl phosphate and 5-amino-6-(D-ribitylamino)uracil: step 1/2. In terms of biological role, catalyzes the formation of 6,7-dimethyl-8-ribityllumazine by condensation of 5-amino-6-(D-ribitylamino)uracil with 3,4-dihydroxy-2-butanone 4-phosphate. This is the penultimate step in the biosynthesis of riboflavin. The polypeptide is 6,7-dimethyl-8-ribityllumazine synthase (Bordetella petrii (strain ATCC BAA-461 / DSM 12804 / CCUG 43448)).